Here is a 375-residue protein sequence, read N- to C-terminus: MSKGKIIVAMSGGVDSAVTAGLLMEDGYEVIGVNLRTWEYEAPACDTTKKSCCSPEDIRDARDVGISLKIPFYVIKMEKVFQEKVIDRFIEDYQHGKTPNPCVECNTFVKFGALFEKAKALGIDKIATGHYARIARNGERYAIANGIDVGKNQAYYLYGLSQENLKNVIFPLGEMTKPEVRQIARRMGLPVADKSESQEICFIPENDYRKFLEKKNVEFTPGFFKLKDGRIVGKHKGRENFTIGQRKGLGIAWKNPLYVISIEDDGSVILGEENETYNESFSVIDLNFQGLAPLNEGESLECRVQVRYRHIPIRCKITKMKEGLIVHPLEDVRGVTPGQSAVFYPLDSDYLLLGGIISKGSIQMRIVEPAISVLN.

ATP-binding positions include 9-16 (AMSGGVDS) and Leu-35. Cys-105 serves as the catalytic Nucleophile. The cysteines at positions 105 and 201 are disulfide-linked. Residue Gly-129 coordinates ATP. An interaction with tRNA region spans residues 151–153 (KNQ). Cys-201 acts as the Cysteine persulfide intermediate in catalysis. The interaction with tRNA stretch occupies residues 307–308 (RY).

Belongs to the MnmA/TRMU family.

It localises to the cytoplasm. It catalyses the reaction S-sulfanyl-L-cysteinyl-[protein] + uridine(34) in tRNA + AH2 + ATP = 2-thiouridine(34) in tRNA + L-cysteinyl-[protein] + A + AMP + diphosphate + H(+). Catalyzes the 2-thiolation of uridine at the wobble position (U34) of tRNA, leading to the formation of s(2)U34. The chain is tRNA-specific 2-thiouridylase MnmA from Leptospira interrogans serogroup Icterohaemorrhagiae serovar Lai (strain 56601).